A 429-amino-acid polypeptide reads, in one-letter code: Glutamyl-tRNA reductase (429 aa).

Substrate is bound by residues 49-52 (TCNR), S107, 112-114 (EPQ), and Q118. Catalysis depends on C50, which acts as the Nucleophile. 187-192 (GAGETI) provides a ligand contact to NADP(+).

The protein belongs to the glutamyl-tRNA reductase family. In terms of assembly, homodimer.

The enzyme catalyses (S)-4-amino-5-oxopentanoate + tRNA(Glu) + NADP(+) = L-glutamyl-tRNA(Glu) + NADPH + H(+). Its pathway is porphyrin-containing compound metabolism; protoporphyrin-IX biosynthesis; 5-aminolevulinate from L-glutamyl-tRNA(Glu): step 1/2. Catalyzes the NADPH-dependent reduction of glutamyl-tRNA(Glu) to glutamate 1-semialdehyde (GSA). This Pseudomonas fluorescens (strain SBW25) protein is Glutamyl-tRNA reductase.